We begin with the raw amino-acid sequence, 913 residues long: Protein translocase subunit SecA (913 aa).

Residues Gln87, 105–109 (GEGKT), and Asp517 contribute to the ATP site. Disordered regions lie at residues 568 to 588 (ESRR…DPGS) and 871 to 913 (EVAV…GKLS). Cys897, Cys899, Cys908, and His909 together coordinate Zn(2+). The span at 903–913 (KKYKQCHGKLS) shows a compositional bias: basic residues.

Belongs to the SecA family. Monomer and homodimer. Part of the essential Sec protein translocation apparatus which comprises SecA, SecYEG and auxiliary proteins SecDF-YajC and YidC. Zn(2+) serves as cofactor.

Its subcellular location is the cell inner membrane. It localises to the cytoplasm. The enzyme catalyses ATP + H2O + cellular proteinSide 1 = ADP + phosphate + cellular proteinSide 2.. Its function is as follows. Part of the Sec protein translocase complex. Interacts with the SecYEG preprotein conducting channel. Has a central role in coupling the hydrolysis of ATP to the transfer of proteins into and across the cell membrane, serving both as a receptor for the preprotein-SecB complex and as an ATP-driven molecular motor driving the stepwise translocation of polypeptide chains across the membrane. This chain is Protein translocase subunit SecA, found in Coxiella burnetii (strain RSA 493 / Nine Mile phase I).